We begin with the raw amino-acid sequence, 372 residues long: Glutamate 5-kinase (372 aa).

Lysine 14 provides a ligand contact to ATP. Substrate is bound by residues serine 54, aspartate 141, and asparagine 153. 173-174 (TD) contacts ATP. A PUA domain is found at 280 to 358 (RGTLTLDEGA…DEIEKLLGYV (79 aa)).

The protein belongs to the glutamate 5-kinase family.

Its subcellular location is the cytoplasm. It carries out the reaction L-glutamate + ATP = L-glutamyl 5-phosphate + ADP. Its pathway is amino-acid biosynthesis; L-proline biosynthesis; L-glutamate 5-semialdehyde from L-glutamate: step 1/2. Functionally, catalyzes the transfer of a phosphate group to glutamate to form L-glutamate 5-phosphate. This is Glutamate 5-kinase from Stutzerimonas stutzeri (strain A1501) (Pseudomonas stutzeri).